Consider the following 517-residue polypeptide: Pentatricopeptide repeat-containing protein At5g42450, mitochondrial (517 aa).

The transit peptide at 1-23 (MLHMILSQRVILLRKYHSSANAL) directs the protein to the mitochondrion. 9 PPR repeats span residues 57–91 (DVISATAVIGRFVKESRHVEASQAFKRLLCLGIRP), 92–126 (NEFTFGTVIGSSTTSRDVKLGKQLHCYALKMGLAS), 127–157 (NVFVGSAVLNCYVKLSTLTDARRCFDDTRDP), 158–188 (NVVSITNLISGYLKKHEFEEALSLFRAMPER), 189–223 (SVVTWNAVIGGFSQTGRNEEAVNTFVDMLREGVVI), 225–259 (NESTFPCAITAISNIASHGAGKSIHACAIKFLGKR), 261–291 (NVFVWNSLISFYSKCGNMEDSLLAFNKLEEE), 294–329 (NIVSWNSMIWGYAHNGRGEEAVAMFEKMVKDTNLRP), and 368–398 (ELEHYACMVDMLSRSGRFKEAEELIKSMPLD). The segment at 403–478 (FWKALLGGCQ…FTGCSWIEVR (76 aa)) is type E motif. A type E(+) motif region spans residues 479-509 (DQIRVFVNADKNNELKDEVYRMLALVSQHLE).

Belongs to the PPR family. PCMP-E subfamily.

The protein localises to the mitochondrion. The protein is Pentatricopeptide repeat-containing protein At5g42450, mitochondrial (PCMP-E102) of Arabidopsis thaliana (Mouse-ear cress).